The primary structure comprises 20 residues: Phospholipase A2 homolog P-elapitoxin-Aa1a gamma chain (20 aa).

This sequence belongs to the phospholipase A2 family. Group I subfamily. As to quaternary structure, heterotrimer of alpha, beta and gamma chains, each related to PLA2. In terms of processing, glycosylated. In terms of tissue distribution, expressed by the venom gland.

The protein localises to the secreted. Heterotrimer: Snake venom phospholipase A2 (PLA2) that has presynaptic neurotoxicity. Inhibits nerve-evoked twitch contractions but not responses to cholinergic agonists acetylcholine and carbachol and to depolarizing agonist KCl. Causes a fade in tetanic contractions. Displays a triphasic mode of action with depression, enhancement and blockade of neurotransmission. Does not display myotoxic activity such as changes in baseline muscle tension or inhibition of directly stimulated muscle twitches. All subunits are necessary for maximum toxicity. Functionally, monomer: the gamma chain has no significant enzymatic activity and is not toxic by itself. The polypeptide is Phospholipase A2 homolog P-elapitoxin-Aa1a gamma chain (Acanthophis antarcticus (Common death adder)).